The sequence spans 1053 residues: LRR receptor-like serine/threonine-protein kinase GHR1 (1053 aa).

A signal peptide spans 1 to 18 (MNLSRILLLSMFFLSAMG). Topologically, residues 19–630 (QLPSQDIMAL…NKSTNKLVKV (612 aa)) are extracellular. LRR repeat units lie at residues 73 to 93 (GVVL…FSNL), 94 to 119 (TKLV…SFKS), 121 to 141 (QFLD…IGRS), 142 to 165 (VSLR…MGGL), 166 to 189 (ISLQ…LTRL), 191 to 212 (DLLY…GFEL), 213 to 237 (ISSL…FFLL), 239 to 260 (NASY…LLPG), 262 to 285 (SESI…GFQL), 286 to 309 (FQNL…FNYV), 310 to 333 (YDLE…LLKG), 335 to 357 (SLLL…SIMS), and 358 to 384 (TTLH…CVLL). N-linked (GlcNAc...) asparagine glycosylation is present at Asn-92. Phosphoserine; by HT1 is present on residues Ser-100 and Ser-102. An N-linked (GlcNAc...) asparagine glycan is attached at Asn-103. Ser-105 and Ser-126 each carry phosphoserine; by HT1. N-linked (GlcNAc...) asparagine glycosylation is found at Asn-146 and Asn-153. An N-linked (GlcNAc...) asparagine glycan is attached at Asn-196. A glycan (N-linked (GlcNAc...) asparagine) is linked at Asn-239. A Phosphoserine; by HT1 modification is found at Ser-262. Asn-269 carries N-linked (GlcNAc...) asparagine glycosylation. Ser-278 is subject to Phosphoserine; by HT1. Thr-280 is modified (phosphothreonine; by HT1). Phosphoserine; by HT1 is present on Ser-281. Ser-325 bears the Phosphoserine; by HT1 mark. N-linked (GlcNAc...) asparagine glycosylation occurs at Asn-347. Asn-394 carries N-linked (GlcNAc...) asparagine glycosylation. 8 LRR repeats span residues 401–425 (WENI…TPQL), 426–449 (LRAN…IPTH), 450–474 (YPKL…LLSM), 476–498 (TLEE…PSSG), 499–521 (SRIR…VFGS), 522–546 (LTNL…MNDI), 548–570 (SLSS…LSSN), and 572–592 (MAFN…LKNF). At Tyr-406 the chain carries Phosphotyrosine; by HT1. Ser-410 carries the post-translational modification Phosphoserine; by HT1. Thr-415 is modified (phosphothreonine; by HT1). Ser-417 is subject to Phosphoserine; by HT1. An N-linked (GlcNAc...) asparagine glycan is attached at Asn-432. Residue Ser-434 is modified to Phosphoserine; by HT1. Residues Asn-534, Asn-566, and Asn-575 are each glycosylated (N-linked (GlcNAc...) asparagine). Ser-613, Ser-614, and Ser-616 each carry phosphoserine; by HT1. Asn-621 is a glycosylation site (N-linked (GlcNAc...) asparagine). Residues 631-651 (VIIVSCAVALIILILVAILLF) traverse the membrane as a helical segment. The Cytoplasmic segment spans residues 652–1053 (CICKSRRREE…KTIYEDLSSI (402 aa)). Residues 662-671 (RSITGKETNR) show a composition bias toward basic and acidic residues. A disordered region spans residues 662-684 (RSITGKETNRRAQTIPSGSGGGM). 2 positions are modified to phosphothreonine; by HT1: Thr-669 and Thr-675. Ser-678, Ser-680, Ser-698, Ser-699, and Ser-700 each carry phosphoserine; by HT1. The residue at position 704 (Ser-704) is a Phosphoserine. At Thr-713 the chain carries Phosphothreonine; by HT1. Phosphoserine; by HT1 is present on residues Ser-716 and Ser-718. Thr-720 carries the phosphothreonine; by HT1 modification. Phosphoserine; by HT1 occurs at positions 721, 724, and 760. The residue at position 764 (Thr-764) is a Phosphothreonine; by HT1. Ser-769 carries the post-translational modification Phosphoserine; by HT1. Residues 770–1053 (RAPAEVLGRS…KTIYEDLSSI (284 aa)) enclose the Protein kinase domain. ATP-binding positions include 776 to 784 (LGRSSHGTS) and Lys-798. Phosphothreonine; by HT1 occurs at positions 928 and 1010. A Phosphoserine; by HT1 modification is found at Ser-1015. Residue Thr-1045 is modified to Phosphothreonine; by HT1. A Phosphotyrosine; by HT1 modification is found at Tyr-1047. Ser-1051 and Ser-1052 each carry phosphoserine; by HT1.

The protein belongs to the protein kinase superfamily. Ser/Thr protein kinase family. Interacts with SLAC1 (via N-terminus). Binds to ABI2, but not ABI1. Interacts with CPK3. Phosphorylated by HT1; this phosphorylation is inhibited by MPK12 and MPK4. As to expression, expressed in guard cells and in the vasculature of roots and leaves.

It localises to the cell membrane. The enzyme catalyses L-seryl-[protein] + ATP = O-phospho-L-seryl-[protein] + ADP + H(+). It carries out the reaction L-threonyl-[protein] + ATP = O-phospho-L-threonyl-[protein] + ADP + H(+). Its activity is regulated as follows. Negatively regulated by ABI2. Receptor kinase acting as an early component in abscisic acid (ABA) signaling. Required for darkness, ABA, high CO(2) and hydrogen peroxide (H(2)O(2)) induction of S-type anion currents in guard cells leading to stomatal closure, possibly via the phosphorylation and activation of the anion channel SLAC1 and as a scaffolding component. Seems to act in parallel with SRK2E/OST1 in the ABA signaling pathway which regulates stomatal movement. Binds ATP. Involved in the local and/or systemic stomatal responses (e.g. stomatal closure) to light stress. This is LRR receptor-like serine/threonine-protein kinase GHR1 from Arabidopsis thaliana (Mouse-ear cress).